Consider the following 382-residue polypeptide: Quinolinate synthase (382 aa).

Iminosuccinate-binding residues include His-63 and Ser-84. Cys-129 contacts [4Fe-4S] cluster. Residues 155–157 and Ser-172 contribute to the iminosuccinate site; that span reads YAN. Cys-216 serves as a coordination point for [4Fe-4S] cluster. Residues 242-244 and Thr-259 contribute to the iminosuccinate site; that span reads HPE. Cys-313 serves as a coordination point for [4Fe-4S] cluster.

Belongs to the quinolinate synthase family. Type 1 subfamily. [4Fe-4S] cluster serves as cofactor.

It localises to the cytoplasm. It catalyses the reaction iminosuccinate + dihydroxyacetone phosphate = quinolinate + phosphate + 2 H2O + H(+). The protein operates within cofactor biosynthesis; NAD(+) biosynthesis; quinolinate from iminoaspartate: step 1/1. Catalyzes the condensation of iminoaspartate with dihydroxyacetone phosphate to form quinolinate. In Ralstonia pickettii (strain 12J), this protein is Quinolinate synthase.